A 589-amino-acid polypeptide reads, in one-letter code: Cysteine/serine-rich nuclear protein 1 (589 aa).

Disordered regions lie at residues Met-1–Cys-62 and Phe-309–Asp-388. Low complexity-rich tracts occupy residues Ser-17–Arg-41 and Asp-345–Ala-368.

This sequence belongs to the AXUD1 family. In terms of tissue distribution, ubiquitous. Most abundantly expressed in lung, placenta, skeletal muscle, pancreas and leukocyte. Frequently down-regulated in lung, kidney, liver and colon cancers compared with their corresponding normal tissues.

Its subcellular location is the nucleus. In terms of biological role, binds to the consensus sequence 5'-AGAGTG-3' and has transcriptional activator activity. May have a tumor-suppressor function. May play a role in apoptosis. This Homo sapiens (Human) protein is Cysteine/serine-rich nuclear protein 1 (CSRNP1).